The sequence spans 208 residues: Histone H1t (208 aa).

The segment covering 1-12 has biased composition (polar residues); the sequence is MSETAPAASSTL. The segment at 1–39 is disordered; sequence MSETAPAASSTLVPAPVEKPATKRRGKKPGMATARKPRG. A Phosphoserine modification is found at serine 9. The H15 domain occupies 38–111; that stretch reads RGFSVSKLIP…GASGSFKLSK (74 aa). The residue at position 56 (arginine 56) is a Citrulline. A disordered region spans residues 93-208; it reads GVLVQTKGTG…TDLRKAAGRK (116 aa). The span at 121–134 shows a compositional bias: basic residues; it reads KGKKSASAKAKKLG. Serine 141 carries the phosphoserine modification. The span at 143-154 shows a compositional bias: basic residues; the sequence is KSSKTKVVKKPK. Threonine 156 carries the phosphothreonine modification. Serine 163, serine 178, and serine 187 each carry phosphoserine. A compositionally biased stretch (basic and acidic residues) spans 199–208; the sequence is TDLRKAAGRK.

This sequence belongs to the histone H1/H5 family. Phosphorylated in early spermatids. In terms of processing, citrullination at Arg-56 (H1R54ci) by PADI4 takes place within the DNA-binding site of H1 and results in its displacement from chromatin and global chromatin decondensation, thereby promoting pluripotency and stem cell maintenance. As to expression, testis-specific. Expressed in pachytene spermatocytes during meiotic prophase I.

Its subcellular location is the nucleus. It localises to the chromosome. Functionally, testis-specific histone H1 that forms less compacted chromatin compared to other H1 histone subtypes. Formation of more relaxed chromatin may be required to promote chromatin architecture required for proper chromosome regulation during meiosis, such as homologous recombination. Histones H1 act as linkers that bind to nucleosomes and compact polynucleosomes into a higher-order chromatin configuration. This chain is Histone H1t, found in Rattus norvegicus (Rat).